Consider the following 206-residue polypeptide: Ribosomal RNA large subunit methyltransferase E (206 aa).

5 residues coordinate S-adenosyl-L-methionine: G61, W63, D81, D97, and D122. The Proton acceptor role is filled by K162.

The protein belongs to the class I-like SAM-binding methyltransferase superfamily. RNA methyltransferase RlmE family.

The protein localises to the cytoplasm. The catalysed reaction is uridine(2552) in 23S rRNA + S-adenosyl-L-methionine = 2'-O-methyluridine(2552) in 23S rRNA + S-adenosyl-L-homocysteine + H(+). In terms of biological role, specifically methylates the uridine in position 2552 of 23S rRNA at the 2'-O position of the ribose in the fully assembled 50S ribosomal subunit. The chain is Ribosomal RNA large subunit methyltransferase E from Neisseria gonorrhoeae (strain NCCP11945).